Here is a 138-residue protein sequence, read N- to C-terminus: Flagellar basal body rod protein FlgB (138 aa).

It belongs to the flagella basal body rod proteins family. As to quaternary structure, the basal body constitutes a major portion of the flagellar organelle and consists of a number of rings mounted on a central rod. In Gram-negative bacteria, at least four rings, L, P, S and M are present, whereas Gram-positive bacteria lack the L and P rings. The rod consists of about 26 subunits of FlgG in the distal portion, and FlgB, FlgC and FlgF build up the proximal portion of the rod with about 6 subunits each. Rod assembly occurs by export via the flagellum-specific pathway of its constituent proteins and by their incorporation into the rod structure in the probable order of FlgB, FlgC, FlgF and FlgG. Another protein, FliE, also assembles onto the stable rod structure.

Its subcellular location is the bacterial flagellum basal body. Structural component of flagellum, the bacterial motility apparatus. Part of the rod structure of flagellar basal body. The polypeptide is Flagellar basal body rod protein FlgB (flgB) (Escherichia coli (strain K12)).